We begin with the raw amino-acid sequence, 411 residues long: 2-acylphloroglucinol 4-prenyltransferase, chloroplastic (411 aa).

Residues 1 to 91 (MELSSVSSFS…CNDQRGNSIR (91 aa)) constitute a chloroplast transit peptide. The next 8 helical transmembrane spans lie at 159 to 179 (LLGM…NQIF), 198 to 218 (ISVE…FILI), 226 to 246 (LLTS…VPPF), 253 to 273 (ITAF…VYYA), 278 to 298 (LGLA…ITFM), 333 to 353 (LLGT…AIIW), 356 to 376 (AFKS…LIFQ), and 391 to 411 (KSFY…YLFI).

This sequence belongs to the UbiA prenyltransferase family. The cofactor is Mg(2+). Expressed in glandular trichomes called lupulin glands, and in early stage and mature cones. Detected in leaves, but not in root, stem and first stage of flowers. No expression in male flowers.

It is found in the plastid. The protein localises to the chloroplast membrane. It catalyses the reaction a 2-acylphloroglucinol + dimethylallyl diphosphate = a 2-acyl-4-prenylphloroglucinol + diphosphate. The protein operates within secondary metabolite biosynthesis. Functionally, involved in the biosynthesis of prenylated phenolics natural products which contribute to the bitter taste of beer and display broad biological activities. Catalyzes the first prenylation step in the beta-bitter acid pathway. Abble to transfer dimethylallyl diphosphate (DMAPP) or geranyl diphosphate (GPP) to phlorisovalerophenone (PIVP), phlorisobutrylphenone (PIMP) and naringenin chalcone. Can also use phlorisobutyrophenone (PIBP) and phlormethylbutanophenone (PMBP) as substrates, but not 6'-O-methylated chalcone or naringenin. The protein is 2-acylphloroglucinol 4-prenyltransferase, chloroplastic of Humulus lupulus (European hop).